We begin with the raw amino-acid sequence, 428 residues long: Glutamate-1-semialdehyde 2,1-aminomutase 1 (428 aa).

Position 267 is an N6-(pyridoxal phosphate)lysine (lysine 267).

The protein belongs to the class-III pyridoxal-phosphate-dependent aminotransferase family. HemL subfamily. In terms of assembly, homodimer. Pyridoxal 5'-phosphate serves as cofactor.

It localises to the cytoplasm. It catalyses the reaction (S)-4-amino-5-oxopentanoate = 5-aminolevulinate. It functions in the pathway porphyrin-containing compound metabolism; protoporphyrin-IX biosynthesis; 5-aminolevulinate from L-glutamyl-tRNA(Glu): step 2/2. This Staphylococcus aureus (strain Mu3 / ATCC 700698) protein is Glutamate-1-semialdehyde 2,1-aminomutase 1.